Reading from the N-terminus, the 466-residue chain is Glutamate--tRNA ligase (466 aa).

Positions 11–21 (PSPTGFIHLGN) match the 'HIGH' region motif. Residues 243–247 (KMSKR) carry the 'KMSKS' region motif. Residue K246 coordinates ATP.

It belongs to the class-I aminoacyl-tRNA synthetase family. Glutamate--tRNA ligase type 1 subfamily. In terms of assembly, monomer.

It localises to the cytoplasm. The enzyme catalyses tRNA(Glu) + L-glutamate + ATP = L-glutamyl-tRNA(Glu) + AMP + diphosphate. Its function is as follows. Catalyzes the attachment of glutamate to tRNA(Glu) in a two-step reaction: glutamate is first activated by ATP to form Glu-AMP and then transferred to the acceptor end of tRNA(Glu). The chain is Glutamate--tRNA ligase from Cupriavidus taiwanensis (strain DSM 17343 / BCRC 17206 / CCUG 44338 / CIP 107171 / LMG 19424 / R1) (Ralstonia taiwanensis (strain LMG 19424)).